Reading from the N-terminus, the 1214-residue chain is NBPF family member NBPF1 (1214 aa).

Positions 70–128 (MLRNERQFKEEKLAEQLKQAEELRQYKVLVHSQERELTQLREKLREGRDASRSLNQHLQ) form a coiled coil. The segment at 162 to 200 (LSPENDEDEDEDVQVEEAEKVLESSAPREVQKAEESKVP) is disordered. Residues 165-177 (ENDEDEDEDVQVE) show a composition bias toward acidic residues. The Olduvai 1 domain occupies 165-259 (ENDEDEDEDV…ECQDAVNILP (95 aa)). A compositionally biased stretch (basic and acidic residues) spans 190–200 (EVQKAEESKVP). Residues 292–399 (NEKLHPQLAE…ASRSLNQHLQ (108 aa)) adopt a coiled-coil conformation. The segment at 433–471 (LSPENDEDEDEDVQVEEAEKVLESSAPREVQKAEESKVP) is disordered. The span at 436–448 (ENDEDEDEDVQVE) shows a compositional bias: acidic residues. Positions 436 to 530 (ENDEDEDEDV…ECQDAVNILP (95 aa)) constitute an Olduvai 2 domain. A compositionally biased stretch (basic and acidic residues) spans 461–471 (EVQKAEESKVP). The stretch at 610–670 (KSMLRNERQF…ASCSLNQHLQ (61 aa)) forms a coiled coil. Olduvai domains are found at residues 707-799 (ENDN…HIIP), 800-888 (ENES…ATGP), 891-946 (SREL…LDMD), 947-1038 (EIEK…PPCP), 1041-1114 (SREL…RSTK), and 1116-1214 (RRRR…IFPQ). Disordered regions lie at residues 722 to 746 (EKVQ…EDSL) and 791 to 837 (WEDA…EGYS). Composition is skewed to acidic residues over residues 801–810 (NESDDEEEEE) and 821–833 (ESEE…ESWD). Residues 1102–1121 (GKGKKRRGRRSTKKRRRRGR) show a composition bias toward basic residues. The interval 1102-1136 (GKGKKRRGRRSTKKRRRRGRKEGEEDQNPPCPRLS) is disordered.

It belongs to the NBPF family. In terms of tissue distribution, widely expressed. The only tissue which shows a weak expression is kidney.

Its subcellular location is the cytoplasm. The protein is NBPF family member NBPF1 of Homo sapiens (Human).